A 602-amino-acid chain; its full sequence is MDNRVSGTTSNGETKPVCPVMEKVEEDGTLEREQWTNKMEFVLSVAGEIIGLGNVWRFPYLCYKNGGGAFFIPYLIFLFTCGIPVFFLETALGQYTNQGGITAWRKICPIFEGIGYASQMIVSLLNVYYIVVLAWALFYLFSSFTTDLPWGSCSHEWNTENCVEFQKTNNSLNVTSENATSPVIEFWERRVLKISDGIQHLGSLRWELVLCLLLAWIICYFCIWKGVKSTGKVVYFTATFPYLMLVVLLIRGVTLPGAAQGIQFYLYPNITRLWDPQVWMDAGTQIFFSFAICLGCLTALGSYNKYHNNCYRDCVALCILNSSTSFVAGFAIFSILGFMSQEQGVPISEVAESGPGLAFIAYPRAVVMLPFSPLWACCFFFMVVLLGLDSQFVCVESLVTALVDMYPRVFRKKNRREILILIVSVVSFFIGLIMLTEGGMYVFQLFDYYAASGMCLLFVAIFESLCVAWVYGASRFYDNIEDMIGYKPWPLIKYCWLFFTPAVCLATFLFSLIKYTPLTYNKKYTYPWWGDALGWLLALSSMVCIPAWSIYKLRTLKGPLRERLRQLVCPAEDLPQKSQPELTSPATPMTSLLRLTELESNC.

Over 1–40 (MDNRVSGTTSNGETKPVCPVMEKVEEDGTLEREQWTNKME) the chain is Cytoplasmic. The next 3 helical transmembrane spans lie at 41 to 61 (FVLS…FPYL), 68 to 88 (GAFF…VFFL), and 121 to 141 (IVSL…FYLF). Topologically, residues 142–206 (SSFTTDLPWG…GIQHLGSLRW (65 aa)) are extracellular. Cysteine 153 and cysteine 162 are joined by a disulfide. N-linked (GlcNAc...) asparagine glycans are attached at residues asparagine 169, asparagine 173, and asparagine 178. Transmembrane regions (helical) follow at residues 207–227 (ELVL…WKGV) and 233–253 (VVYF…IRGV). Asparagine 269 carries N-linked (GlcNAc...) asparagine glycosylation. Helical transmembrane passes span 282 to 302 (AGTQ…ALGS), 319 to 339 (ILNS…LGFM), 366 to 386 (VVML…VVLL), 418 to 438 (ILIL…LTEG), 453 to 473 (GMCL…VYGA), 490 to 510 (PLIK…TFLF), and 528 to 548 (WWGD…IPAW). The Cytoplasmic segment spans residues 549–602 (SIYKLRTLKGPLRERLRQLVCPAEDLPQKSQPELTSPATPMTSLLRLTELESNC). Threonine 587 bears the Phosphothreonine mark. Serine 591 carries the phosphoserine modification.

It belongs to the sodium:neurotransmitter symporter (SNF) (TC 2.A.22) family. SLC6A13 subfamily. In terms of tissue distribution, brain, retina, and peripheral tissues. Expressed in hepatocytes (at protein level).

The protein localises to the cell membrane. Its subcellular location is the basolateral cell membrane. The enzyme catalyses 4-aminobutanoate(out) + chloride(out) + 2 Na(+)(out) = 4-aminobutanoate(in) + chloride(in) + 2 Na(+)(in). It carries out the reaction taurine(out) + chloride(out) + 2 Na(+)(out) = taurine(in) + chloride(in) + 2 Na(+)(in). The catalysed reaction is beta-alanine(out) + chloride(out) + 2 Na(+)(out) = beta-alanine(in) + chloride(in) + 2 Na(+)(in). It catalyses the reaction hypotaurine(out) + chloride(out) + 2 Na(+)(out) = hypotaurine(in) + chloride(in) + 2 Na(+)(in). GABA transport is inhibited by beta-alanine, L-2,4-Diaminobutyric acid, hypotaurine and nipecotic acid. Taurine transport is inhibited by hypotaurine, beta-alanine and nipecotic acid. Its function is as follows. Mediates sodium- and chloride-dependent transport of gamma-aminobutyric acid (GABA). Mediates transport of taurine and is the major taurine transporter in hepatocytes. Can also mediate transport of beta-alanine and hypotaurine. This is Sodium- and chloride-dependent GABA transporter 2 (Slc6a13) from Rattus norvegicus (Rat).